A 550-amino-acid polypeptide reads, in one-letter code: uncharacterized protein (550 aa).

The signal sequence occupies residues 1–13 (MAGALFEPSFAAA). The interval 312-358 (DAQPDPHLSGDEPPSRPLTPETTLFEALTPDPEPDPPATHAPAELIT) is disordered.

To M.tuberculosis Rv3776.

This is an uncharacterized protein from Mycobacterium tuberculosis (strain CDC 1551 / Oshkosh).